Reading from the N-terminus, the 212-residue chain is RNA chaperone ProQ (212 aa).

Basic and acidic residues-rich tracts occupy residues 102–124 (ALKE…EKAK) and 132–144 (RKAD…DKPK). Residues 102-149 (ALKESKERVFASRRTNTKEEKAKQPRRPAPRKADAAAKSDKPKAAPKA) are disordered.

Belongs to the ProQ family.

It is found in the cytoplasm. In terms of biological role, RNA chaperone with significant RNA binding, RNA strand exchange and RNA duplexing activities. This is RNA chaperone ProQ from Aeromonas hydrophila subsp. hydrophila (strain ATCC 7966 / DSM 30187 / BCRC 13018 / CCUG 14551 / JCM 1027 / KCTC 2358 / NCIMB 9240 / NCTC 8049).